Reading from the N-terminus, the 117-residue chain is Large ribosomal subunit protein uL24 (117 aa).

Positions 1–10 (MSKQPRKQRK) are enriched in basic residues. The tract at residues 1-28 (MSKQPRKQRKALYNAPAHARGKHMSATL) is disordered.

This sequence belongs to the universal ribosomal protein uL24 family. As to quaternary structure, part of the 50S ribosomal subunit.

Its function is as follows. One of two assembly initiator proteins, it binds directly to the 5'-end of the 23S rRNA, where it nucleates assembly of the 50S subunit. Located at the polypeptide exit tunnel on the outside of the subunit. The protein is Large ribosomal subunit protein uL24 of Methanobrevibacter smithii (strain ATCC 35061 / DSM 861 / OCM 144 / PS).